The sequence spans 308 residues: ADP-L-glycero-D-manno-heptose-6-epimerase (308 aa).

NADP(+) is bound by residues 10–11, 31–32, K38, K53, 75–79, and N92; these read FI, DN, and EGACS. Residue Y139 is the Proton acceptor of the active site. K143 is a binding site for NADP(+). N168 contacts substrate. 2 residues coordinate NADP(+): V169 and K177. The active-site Proton acceptor is K177. Substrate is bound by residues S179, H186, 200–203, R208, and Y271; that span reads FAGS.

The protein belongs to the NAD(P)-dependent epimerase/dehydratase family. HldD subfamily. As to quaternary structure, homopentamer. It depends on NADP(+) as a cofactor.

The catalysed reaction is ADP-D-glycero-beta-D-manno-heptose = ADP-L-glycero-beta-D-manno-heptose. It functions in the pathway nucleotide-sugar biosynthesis; ADP-L-glycero-beta-D-manno-heptose biosynthesis; ADP-L-glycero-beta-D-manno-heptose from D-glycero-beta-D-manno-heptose 7-phosphate: step 4/4. Its function is as follows. Catalyzes the interconversion between ADP-D-glycero-beta-D-manno-heptose and ADP-L-glycero-beta-D-manno-heptose via an epimerization at carbon 6 of the heptose. The protein is ADP-L-glycero-D-manno-heptose-6-epimerase of Actinobacillus succinogenes (strain ATCC 55618 / DSM 22257 / CCUG 43843 / 130Z).